The following is a 584-amino-acid chain: Negative regulator of RAS-cAMP pathway (584 aa).

Phosphothreonine is present on T25. Disordered regions lie at residues 95–167 (PIKP…STTS), 209–279 (PLQS…SKTS), 291–320 (SEDE…DDYN), 343–366 (NLDS…HDPV), and 381–432 (SNSN…SLKT). Polar residues-rich tracts occupy residues 114–127 (PPTT…TRPM), 229–254 (CIDN…SFPQ), and 267–278 (NDQNGQLSLSKT). S247 and S276 each carry phosphoserine. Acidic residues predominate over residues 307–320 (FYADEDDEEYDDYN). Positions 343–363 (NLDSTKSSVSSANTINSNTSH) are enriched in polar residues. Low complexity predominate over residues 381–392 (SNSNNHNTAHSE). The span at 398-432 (VSPTPQSSHSNIGPQPQQNPPSANGIKQQKPSLKT) shows a compositional bias: polar residues. S442 carries the post-translational modification Phosphoserine. S518 carries the post-translational modification Phosphoserine; by PKA. The disordered stretch occupies residues 551 to 584 (DNTSIANSNGNGNDDTSNQRTEALGRKTSNGGRI). Residues 557 to 568 (NSNGNGNDDTSN) show a composition bias toward low complexity.

It is found in the nucleus. Its function is as follows. Negative regulator of Ras-cAMP pathway. Involved in transcriptional regulation of galactose-inducible genes. This is Negative regulator of RAS-cAMP pathway (MKS1) from Saccharomyces cerevisiae (strain ATCC 204508 / S288c) (Baker's yeast).